A 349-amino-acid chain; its full sequence is Methylthioribose-1-phosphate isomerase (349 aa).

Residues 51 to 53 (RGA), Arg-94, and Gln-199 contribute to the substrate site. Asp-240 (proton donor) is an active-site residue. 250–251 (NK) provides a ligand contact to substrate.

This sequence belongs to the eIF-2B alpha/beta/delta subunits family. MtnA subfamily. As to quaternary structure, homodimer.

The enzyme catalyses 5-(methylsulfanyl)-alpha-D-ribose 1-phosphate = 5-(methylsulfanyl)-D-ribulose 1-phosphate. It functions in the pathway amino-acid biosynthesis; L-methionine biosynthesis via salvage pathway; L-methionine from S-methyl-5-thio-alpha-D-ribose 1-phosphate: step 1/6. In terms of biological role, catalyzes the interconversion of methylthioribose-1-phosphate (MTR-1-P) into methylthioribulose-1-phosphate (MTRu-1-P). This chain is Methylthioribose-1-phosphate isomerase, found in Bacillus cytotoxicus (strain DSM 22905 / CIP 110041 / 391-98 / NVH 391-98).